Reading from the N-terminus, the 230-residue chain is UPF0173 metal-dependent hydrolase Rsph17025_2229 (230 aa).

This sequence belongs to the UPF0173 family.

The sequence is that of UPF0173 metal-dependent hydrolase Rsph17025_2229 from Cereibacter sphaeroides (strain ATCC 17025 / ATH 2.4.3) (Rhodobacter sphaeroides).